A 141-amino-acid chain; its full sequence is Granulocyte-macrophage colony-stimulating factor (141 aa).

Residues 1–17 (MWLQNLLFLGIVVYSLS) form the signal peptide. The O-linked (GalNAc...) serine glycan is linked to serine 22. Threonine 27 carries an O-linked (GalNAc...) threonine glycan. Cystine bridges form between cysteine 68/cysteine 110 and cysteine 102/cysteine 135. Residues asparagine 83 and asparagine 92 are each glycosylated (N-linked (GlcNAc...) asparagine).

This sequence belongs to the GM-CSF family. In terms of assembly, monomer. The signaling GM-CSF receptor complex is a dodecamer of two head-to-head hexamers of two alpha, two beta, and two ligand subunits.

It localises to the secreted. Functionally, cytokine that stimulates the growth and differentiation of hematopoietic precursor cells from various lineages, including granulocytes, macrophages, eosinophils and erythrocytes. The polypeptide is Granulocyte-macrophage colony-stimulating factor (Csf2) (Mus musculus (Mouse)).